The following is a 746-amino-acid chain: Teichoic acid poly(glycerol phosphate) polymerase (746 aa).

Residues 473-477 (WHGTP), Arg540, 573-574 (PT), 610-612 (RMH), 652-653 (SS), and Asp657 contribute to the CDP-glycerol site.

Belongs to the CDP-glycerol glycerophosphotransferase family.

It localises to the cell membrane. It carries out the reaction 4-O-[(2R)-glycerylphospho]-N-acetyl-beta-D-mannosaminyl-(1-&gt;4)-N-acetyl-alpha-D-glucosaminyl di-trans,octa-cis-undecaprenyl diphosphate + n CDP-glycerol = 4-O-{[(2R)-1-glycerylphospho](n)-(2R)-1-glycerylphospho}-N-acetyl-beta-D-mannosaminyl-(1-&gt;4)-N-acetyl-alpha-D-glucosaminyl undecaprenyl diphosphate + n CMP + n H(+). The protein operates within cell wall biogenesis; poly(glycerol phosphate) teichoic acid biosynthesis. Its function is as follows. Responsible for the polymerization of the main chain of the major teichoic acid by sequential transfer of glycerol phosphate units from CDP-glycerol to the disaccharide linkage unit. Synthesizes polymers of approximately 35 glycerol phosphate units in length. This Bacillus subtilis (strain 168) protein is Teichoic acid poly(glycerol phosphate) polymerase (tagF).